Reading from the N-terminus, the 357-residue chain is Protein Wnt-8c (357 aa).

Residues 1-16 (MRGSTFLLLSIVGIYG) form the signal peptide. A disulfide bridge connects residues C55 and C66. A glycan (N-linked (GlcNAc...) asparagine) is linked at N104. 9 cysteine pairs are disulfide-bonded: C105–C113, C115–C133, C181–C195, C183–C190, C260–C298, C276–C291, C313–C328, C315–C325, and C320–C321. The O-palmitoleoyl serine moiety is linked to residue S187. N263 and N282 each carry an N-linked (GlcNAc...) asparagine glycan. N346 carries an N-linked (GlcNAc...) asparagine glycan.

Belongs to the Wnt family. Post-translationally, palmitoleoylation is required for efficient binding to frizzled receptors. Depalmitoleoylation leads to Wnt signaling pathway inhibition. In terms of processing, proteolytic processing by tiki1 and tiki2 promotes oxidation and formation of large disulfide-bond oligomers, leading to inactivation of wnt8c. In terms of tissue distribution, cells that form rhombomere 4. Hensen node and the neural plate immediately anterior to it.

Its subcellular location is the secreted. It localises to the extracellular space. It is found in the extracellular matrix. Ligand for members of the frizzled family of seven transmembrane receptors. Probable developmental protein. Is likely to signal over only few cell diameters. May be involved in the regulation of axis formation and in the rhombomere specification. In Gallus gallus (Chicken), this protein is Protein Wnt-8c (WNT8C).